We begin with the raw amino-acid sequence, 316 residues long: 4-hydroxy-3-methylbut-2-enyl diphosphate reductase (316 aa).

Cysteine 12 lines the [4Fe-4S] cluster pocket. (2E)-4-hydroxy-3-methylbut-2-enyl diphosphate-binding residues include histidine 41 and histidine 74. Histidine 41 and histidine 74 together coordinate dimethylallyl diphosphate. The isopentenyl diphosphate site is built by histidine 41 and histidine 74. Cysteine 96 serves as a coordination point for [4Fe-4S] cluster. A (2E)-4-hydroxy-3-methylbut-2-enyl diphosphate-binding site is contributed by histidine 124. Histidine 124 serves as a coordination point for dimethylallyl diphosphate. Histidine 124 provides a ligand contact to isopentenyl diphosphate. Glutamate 126 serves as the catalytic Proton donor. (2E)-4-hydroxy-3-methylbut-2-enyl diphosphate is bound at residue threonine 169. A [4Fe-4S] cluster-binding site is contributed by cysteine 199. Serine 227, serine 228, asparagine 229, and serine 271 together coordinate (2E)-4-hydroxy-3-methylbut-2-enyl diphosphate. Residues serine 227, serine 228, asparagine 229, and serine 271 each coordinate dimethylallyl diphosphate. Residues serine 227, serine 228, asparagine 229, and serine 271 each coordinate isopentenyl diphosphate.

Belongs to the IspH family. It depends on [4Fe-4S] cluster as a cofactor.

The enzyme catalyses isopentenyl diphosphate + 2 oxidized [2Fe-2S]-[ferredoxin] + H2O = (2E)-4-hydroxy-3-methylbut-2-enyl diphosphate + 2 reduced [2Fe-2S]-[ferredoxin] + 2 H(+). It carries out the reaction dimethylallyl diphosphate + 2 oxidized [2Fe-2S]-[ferredoxin] + H2O = (2E)-4-hydroxy-3-methylbut-2-enyl diphosphate + 2 reduced [2Fe-2S]-[ferredoxin] + 2 H(+). Its pathway is isoprenoid biosynthesis; dimethylallyl diphosphate biosynthesis; dimethylallyl diphosphate from (2E)-4-hydroxy-3-methylbutenyl diphosphate: step 1/1. The protein operates within isoprenoid biosynthesis; isopentenyl diphosphate biosynthesis via DXP pathway; isopentenyl diphosphate from 1-deoxy-D-xylulose 5-phosphate: step 6/6. Functionally, catalyzes the conversion of 1-hydroxy-2-methyl-2-(E)-butenyl 4-diphosphate (HMBPP) into a mixture of isopentenyl diphosphate (IPP) and dimethylallyl diphosphate (DMAPP). Acts in the terminal step of the DOXP/MEP pathway for isoprenoid precursor biosynthesis. The sequence is that of 4-hydroxy-3-methylbut-2-enyl diphosphate reductase from Xanthomonas campestris pv. campestris (strain 8004).